Consider the following 515-residue polypeptide: BURP domain-containing protein 9 (515 aa).

The signal sequence occupies residues 1 to 29 (MKATGGPLPLILFLLIIIVLITAQHTAIA). One can recognise a BURP domain in the interval 292–507 (YFFEDNLAPG…GRGSIIWVPV (216 aa)). Asn-321, Asn-332, and Asn-470 each carry an N-linked (GlcNAc...) asparagine glycan.

As to expression, expressed in shoot and panicles.

This chain is BURP domain-containing protein 9 (BURP9), found in Oryza sativa subsp. japonica (Rice).